We begin with the raw amino-acid sequence, 350 residues long: [LysW]-L-2-aminoadipate/[LysW]-L-glutamate phosphate reductase (350 aa).

An NADP(+)-binding site is contributed by 10–13 (SGYT). C150 is an active-site residue. N317 is a binding site for NADP(+).

Belongs to the NAGSA dehydrogenase family. Type 1 subfamily. LysY sub-subfamily.

The protein resides in the cytoplasm. It catalyses the reaction [amino-group carrier protein]-C-terminal-N-(1-carboxy-5-oxopentan-1-yl)-L-glutamine + phosphate + NADP(+) = [amino-group carrier protein]-C-terminal-N-(1-carboxy-5-phosphooxy-5-oxopentan-1-yl)-L-glutamine + NADPH + H(+). The enzyme catalyses [amino-group carrier protein]-C-terminal-gamma-(L-glutamyl-5-semialdehyde)-L-glutamate + phosphate + NADP(+) = [amino-group carrier protein]-C-terminal-gamma-(5-phospho-L-glutamyl)-L-glutamate + NADPH + H(+). It functions in the pathway amino-acid biosynthesis; L-lysine biosynthesis via AAA pathway; L-lysine from L-alpha-aminoadipate (Thermus route): step 3/5. It participates in amino-acid biosynthesis; L-arginine biosynthesis. Its function is as follows. Involved in both the arginine and lysine biosynthetic pathways. The sequence is that of [LysW]-L-2-aminoadipate/[LysW]-L-glutamate phosphate reductase from Sulfolobus acidocaldarius (strain ATCC 33909 / DSM 639 / JCM 8929 / NBRC 15157 / NCIMB 11770).